The primary structure comprises 396 residues: Transcriptional regulator Myc-B (396 aa).

T56 carries O-linked (GlcNAc) threonine glycosylation. Residues 79-87 carry the 9aaTAD motif; sequence EMVSEFLGD. 2 disordered regions span residues 183–251 and 298–318; these read KPCK…THQS and NRKCASPRTSDSEDNDKRRTH. The segment covering 191-212 has biased composition (low complexity); that stretch reads PASTTLPLDTPPNSGSSSSSSD. Positions 213 to 230 are enriched in acidic residues; sequence SESDDEDDEDEEEEEEID. Positions 233 to 244 are enriched in basic and acidic residues; it reads TVEKRKSVKKSD. Positions 313 to 365 constitute a bHLH domain; it reads DKRRTHNVLERQRRNELKLSFFALRDVIPDVANNEKAAKVVILKKATECIASM. The segment at 372 to 393 is leucine-zipper; it reads LISLKEQLRRKCEHLKQRLEQL.

As to quaternary structure, efficient DNA binding requires dimerization with another bHLH protein. Binds DNA as a heterodimer with max.

The protein resides in the nucleus. In terms of biological role, transcription factor that binds DNA in a non-specific manner, yet also specifically recognizes the core sequence 5'-CAC[GA]TG-3'. Activates the transcription of growth-related genes. This Danio rerio (Zebrafish) protein is Transcriptional regulator Myc-B.